Here is a 540-residue protein sequence, read N- to C-terminus: Acetyl-coenzyme A carboxylase carboxyl transferase subunit beta, chloroplastic (540 aa).

A disordered region spans residues 229-249 (YSDNGSSSIRTRTSTSSGSSY). Residues 233–248 (GSSSIRTRTSTSSGSS) are compositionally biased toward low complexity. One can recognise a CoA carboxyltransferase N-terminal domain in the interval 267–538 (LWVQCENCYA…TFHPLKSNKV (272 aa)). Residues Cys-271, Cys-274, Cys-290, and Cys-293 each contribute to the Zn(2+) site. The C4-type zinc-finger motif lies at 271–293 (CENCYALNYNKLFRSKMNVCEQC).

This sequence belongs to the AccD/PCCB family. As to quaternary structure, acetyl-CoA carboxylase is a heterohexamer composed of biotin carboxyl carrier protein, biotin carboxylase and 2 subunits each of ACCase subunit alpha and ACCase plastid-coded subunit beta (accD). The cofactor is Zn(2+).

It localises to the plastid. Its subcellular location is the chloroplast stroma. The enzyme catalyses N(6)-carboxybiotinyl-L-lysyl-[protein] + acetyl-CoA = N(6)-biotinyl-L-lysyl-[protein] + malonyl-CoA. The protein operates within lipid metabolism; malonyl-CoA biosynthesis; malonyl-CoA from acetyl-CoA: step 1/1. In terms of biological role, component of the acetyl coenzyme A carboxylase (ACC) complex. Biotin carboxylase (BC) catalyzes the carboxylation of biotin on its carrier protein (BCCP) and then the CO(2) group is transferred by the transcarboxylase to acetyl-CoA to form malonyl-CoA. The sequence is that of Acetyl-coenzyme A carboxylase carboxyl transferase subunit beta, chloroplastic from Amborella trichopoda.